The sequence spans 404 residues: Putative gustatory receptor 94a (404 aa).

Topologically, residues 1–11 (MDFTSDYAHRR) are cytoplasmic. Residues 12-32 (MVKFLTIILIGFMTVFGLLAN) traverse the membrane as a helical segment. At 33–43 (RYRAGRRERFR) the chain is on the extracellular side. Residues 44–64 (FSKANLAFASLWAIAFSLVYG) traverse the membrane as a helical segment. At 65–133 (RQIYKEYQEG…RLDSRSLYIS (69 aa)) the chain is on the cytoplasmic side. A helical transmembrane segment spans residues 134–154 (IVLALVKTVAFPLTIEVAFIL). Residues 155-171 (QQRRQHPEMSLIWTLYR) are Extracellular-facing. The helical transmembrane segment at 172 to 192 (LFPLIISNFLNNCYFGAMVVV) threads the bilayer. Residues 193–260 (KEILYALNRR…HSGKYLTPMS (68 aa)) are Cytoplasmic-facing. A helical transmembrane segment spans residues 261 to 281 (LSMILSLICHLLGITVGFYSL). The Extracellular segment spans residues 282-296 (YYAIADTLIMGKPYD). Residues 297-317 (GLGSLINLVFLSISLAEITLL) form a helical membrane-spanning segment. Residues 318 to 376 (THLCNHLLVATRRSAVILQEMNLQHADSRYRQAVHGFTLLVTVTKYQIKPLGLYELDMR) are Cytoplasmic-facing. The chain crosses the membrane as a helical span at residues 377 to 397 (LISNVFSAVASFLLILVQADL). Topologically, residues 398–404 (SQRFKMQ) are extracellular.

The protein belongs to the insect chemoreceptor superfamily. Gustatory receptor (GR) family. Gr22e subfamily. In terms of tissue distribution, in larvae, is expressed in neurons of the terminal external chemosensory organ.

Its subcellular location is the cell membrane. Its function is as follows. Probable gustatory receptor which mediates acceptance or avoidance behavior, depending on its substrates. The protein is Putative gustatory receptor 94a (Gr94a) of Drosophila melanogaster (Fruit fly).